The following is a 65-amino-acid chain: Large ribosomal subunit protein bL28 (65 aa).

The protein belongs to the bacterial ribosomal protein bL28 family.

This chain is Large ribosomal subunit protein bL28, found in Bifidobacterium animalis subsp. lactis (strain AD011).